Reading from the N-terminus, the 1128-residue chain is Zinc finger protein 654 (1128 aa).

The tract at residues 498–523 is disordered; it reads GFDSLTDQSTGETDPDDVSGVQPKGH. 5 C2H2-type zinc fingers span residues 572–594, 746–771, 787–809, 815–839, and 844–868; these read FACV…LKNH, FKCP…MTVH, GKCK…LNRH, YFCL…TKSH, and AQCS…EAQH. A disordered region spans residues 891–951; the sequence is DSNPNQEKDS…GNERSDDTVS (61 aa). Polar residues-rich tracts occupy residues 903-915 and 937-951; these read NEKQ…VSTS and SLVQ…DTVS. A phosphoserine mark is found at Ser-1123 and Ser-1127.

It belongs to the krueppel C2H2-type zinc-finger protein family.

The protein resides in the nucleus. Functionally, may be involved in transcriptional regulation. This chain is Zinc finger protein 654, found in Homo sapiens (Human).